The chain runs to 248 residues: Ribonuclease PH (248 aa).

Residues Arg-86 and 124-126 (GTR) each bind phosphate.

This sequence belongs to the RNase PH family. As to quaternary structure, homohexameric ring arranged as a trimer of dimers.

The enzyme catalyses tRNA(n+1) + phosphate = tRNA(n) + a ribonucleoside 5'-diphosphate. Its function is as follows. Phosphorolytic 3'-5' exoribonuclease that plays an important role in tRNA 3'-end maturation. Removes nucleotide residues following the 3'-CCA terminus of tRNAs; can also add nucleotides to the ends of RNA molecules by using nucleoside diphosphates as substrates, but this may not be physiologically important. Probably plays a role in initiation of 16S rRNA degradation (leading to ribosome degradation) during starvation. In Clostridium perfringens (strain ATCC 13124 / DSM 756 / JCM 1290 / NCIMB 6125 / NCTC 8237 / Type A), this protein is Ribonuclease PH.